A 129-amino-acid polypeptide reads, in one-letter code: Integration host factor subunit alpha (129 aa).

The interval 87 to 129 (SALNGEAPPEDHAEIDAREEAAADAAEARGEDFDEEGMEDMEG) is disordered. Residues 95–117 (PEDHAEIDAREEAAADAAEARGE) are compositionally biased toward basic and acidic residues. Residues 118 to 129 (DFDEEGMEDMEG) are compositionally biased toward acidic residues.

Belongs to the bacterial histone-like protein family. Heterodimer of an alpha and a beta chain.

In terms of biological role, this protein is one of the two subunits of integration host factor, a specific DNA-binding protein that functions in genetic recombination as well as in transcriptional and translational control. It is necessary for normal cell growth and the production of carotenoids in response to light. The chain is Integration host factor subunit alpha (ihfA) from Myxococcus xanthus.